Consider the following 606-residue polypeptide: Leucine-rich repeat and immunoglobulin-like domain-containing nogo receptor-interacting protein 1 (606 aa).

The N-terminal stretch at 1-27 (MILQLPSCLCPILLIVVGSILSGSASG) is a signal peptide. Intrachain disulfides connect C28/C34 and C32/C43. The 30-residue stretch at 28–57 (CPQRCDCSPQDRSVLCHRKRYLDVPEGIPT) folds into the LRRNT domain. Residues 28–547 (CPQRCDCSPQ…FDIKTLIIAT (520 aa)) lie on the Extracellular side of the membrane. LRR repeat units follow at residues 58-79 (DTRLLDLSKNRIKALNQDEFSA), 82-103 (YLEELELNENIVSIIEPGAFNG), 106-127 (NLRSLGLRSNRLKLIPLGVFTG), 130-151 (NLTQLDISENKIVILLDDMFQD), 154-175 (NLKSLEVGDNDLVYISHRAFRG), 178-199 (SLEELTLEKCNLTSVPTEALSH), 202-223 (GLITLKLRYLNINVIRDYSFKR), 250-271 (NLTSLSITHSNLSSIPYVAIRH), 274-295 (YLRFLNLSYNPITAVEGSMLYE), 298-319 (RLQEFHLVGGQLSVVEPYAFRG), and 322-343 (HLKVLNVSSNYLSTLEESSFHS). N-linked (GlcNAc...) asparagine glycosylation is present at N130. A glycan (N-linked (GlcNAc...) asparagine) is linked at N188. 3 N-linked (GlcNAc...) asparagine glycosylation sites follow: N250, N260, and N279. 7 N-linked (GlcNAc...) asparagine glycosylation sites follow: N327, N374, N478, N491, N512, N523, and N528. In terms of domain architecture, LRRCT spans 355 to 409 (NPLACDCRLLWIFRRRWRLNFSRQQPSCSSPEYVQGKEFKDFPDVLQPNYFTCRR). Disulfide bonds link C359–C382, C361–C407, and C432–C483. The Ig-like C2-type domain maps to 397 to 496 (PDVLQPNYFT…NAGGNDTSLA (100 aa)). The chain crosses the membrane as a helical span at residues 548–568 (TMGFISFLGVVLFCLVLLFLW). Residues 569–606 (SRGKGNTKHNIEIEYVPRKSDAGLSSADAPRKFNMKMI) lie on the Cytoplasmic side of the membrane.

It is found in the cell membrane. Functionally, may play a role in regulating axonal regeneration and plasticity in the adult central nervous system. This chain is Leucine-rich repeat and immunoglobulin-like domain-containing nogo receptor-interacting protein 1 (lingo1), found in Xenopus tropicalis (Western clawed frog).